Consider the following 487-residue polypeptide: Citrate/succinate antiporter (487 aa).

14 consecutive transmembrane segments (helical) span residues 11-31, 60-80, 95-115, 138-158, 190-210, 214-234, 237-257, 288-308, 309-329, 345-365, 379-399, 401-421, 424-444, and 463-483; these read LLAP…DGMP, FIAV…AKEL, GLAG…IFAL, TLTL…FTPS, IGGY…SMFV, APNV…ISWL, FLCF…LSYV, WTLI…SEVI, NATA…VVPW, LATL…DWFA, ATVI…ASLS, HTAT…GVPM, LCIL…YATG, and LGAI…WPIL.

The protein belongs to the SLC13A/DASS transporter (TC 2.A.47) family. DIT1 subfamily.

The protein resides in the cell inner membrane. In terms of biological role, responsible for the uptake of citrate in exchange to the efflux of succinate. Has a relatively broad specificity for C(4)-dicarboxylates and tricarboxylates. This is Citrate/succinate antiporter (citT) from Escherichia coli O157:H7.